A 914-amino-acid chain; its full sequence is Golgin candidate 6 (914 aa).

Coiled coils occupy residues 723–837 (IEKQ…SLKG) and 863–901 (EDEL…LEDI). Phosphoserine is present on S911.

Its subcellular location is the golgi apparatus. The protein resides in the golgi stack. Its function is as follows. Golgi matrix protein playing a role in tethering of vesicles to Golgi membranes and in maintaining the overall structure of the Golgi apparatus. Functions in the anterograde transport of storage protein precursors from the endoplasmic reticulum (ER) to the Golgi complex. The polypeptide is Golgin candidate 6 (GC6) (Arabidopsis thaliana (Mouse-ear cress)).